Consider the following 591-residue polypeptide: DDB1- and CUL4-associated factor 8 (591 aa).

Residues 1-25 (MSNKRPNTTDGRTDLANGSLSSSPE) show a composition bias toward polar residues. The interval 1-140 (MSNKRPNTTD…EDWVSSETTA (140 aa)) is disordered. Residues S22 and S23 each carry the phosphoserine modification. The Nuclear export signal signature appears at 40 to 51 (IEVEASDLSLSL). Basic and acidic residues-rich tracts occupy residues 66 to 100 (RGTD…HGHS) and 118 to 131 (SRDQ…RALE). A phosphoserine mark is found at S100, S123, and S124. WD repeat units lie at residues 185 to 224 (GHTG…PVLD), 228 to 269 (GHKS…CCKN), 275 to 315 (QHKG…PASK), 323 to 363 (EKKV…ENEN), 379 to 418 (ESKA…GAQY), 426 to 466 (RNNA…IIQF), and 470 to 509 (DKGG…STEL). R198 carries the omega-N-methylarginine; by PRMT1 modification. Positions 552 to 591 (HRRWREPGVGATDADSDESPSSSDTSDEEEGPDRVQCMPS) are disordered.

The protein belongs to the WD repeat DCAF8 family. As to quaternary structure, interacts with DDB1, CUL4A and CUL4B. Interacts with KPNA1, KPNB1 and XPO1. As to expression, expressed in the brain.

It localises to the nucleus. It is found in the cytoplasm. It functions in the pathway protein modification; protein ubiquitination. Its function is as follows. May function as a substrate receptor for CUL4-DDB1 E3 ubiquitin-protein ligase complex. In Mus musculus (Mouse), this protein is DDB1- and CUL4-associated factor 8 (Dcaf8).